The primary structure comprises 350 residues: Protein XRP2 (350 aa).

Over residues 1–10 (MGCFFSKRRK) the composition is skewed to basic residues. Residues 1-31 (MGCFFSKRRKADKESRPENEEERPKQYSWDQ) form a disordered region. Gly2 is lipidated: N-myristoyl glycine. Cys3 carries the S-palmitoyl cysteine lipid modification. Basic and acidic residues predominate over residues 11–31 (ADKESRPENEEERPKQYSWDQ). Residues 24–179 (PKQYSWDQRE…TWSNIHDFTP (156 aa)) form the C-CAP/cofactor C-like domain. GTP is bound by residues 98-99 (GS) and 115-118 (QQFR).

It belongs to the TBCC family. Found in a complex with ARL3, RP2 and UNC119 (or UNC119B); RP2 induces hydrolysis of GTP ARL3 in the complex, leading to the release of UNC119 (or UNC119B). Interacts with ARL3; interaction is direct and stimulated with the activated GTP-bound form of ARL3. Post-translationally, myristoylated on Gly-2; which may be required for membrane targeting. Palmitoylated on Cys-3; which may be required for plasma membrane targeting. Mutation of Cys-3 targets the protein to internal membranes. In terms of tissue distribution, ubiquitous. Expressed in the rod and cone photoreceptors, extending from the tips of the outer segment (OS) through the inner segment (IS) and outer nuclear layer (ONL) and into the synaptic terminals of the outer plexiform layer (ONL). Also detected in the bipolar, horizontal and amacrine cells in the inner nuclear layer (INL), extending to the inner plexiform layer (IPL) and though the ganglion cell layer (GCL) and into the nerve fiber layer (NFL) (at protein level).

The protein resides in the cell membrane. The protein localises to the cell projection. It localises to the cilium. In terms of biological role, acts as a GTPase-activating protein (GAP) involved in trafficking between the Golgi and the ciliary membrane. Involved in localization of proteins, such as NPHP3, to the cilium membrane by inducing hydrolysis of GTP ARL3, leading to the release of UNC119 (or UNC119B). Acts as a GTPase-activating protein (GAP) for tubulin in concert with tubulin-specific chaperone C, but does not enhance tubulin heterodimerization. Acts as a guanine nucleotide dissociation inhibitor towards ADP-ribosylation factor-like proteins. The polypeptide is Protein XRP2 (RP2) (Homo sapiens (Human)).